The sequence spans 599 residues: Serine/threonine-protein kinase Nek1 (599 aa).

Residues 4 to 258 (YEVLEQIGKG…AAELLKHPHL (255 aa)) form the Protein kinase domain. Residues 10 to 18 (IGKGAFGSA) and Lys-33 each bind ATP. The active-site Proton acceptor is Asp-129. Disordered regions lie at residues 364–386 (SIVK…EPPK), 461–482 (SEDP…PQHC), and 504–542 (DDDD…DTSS). A compositionally biased stretch (low complexity) spans 511–530 (DSSSGRNNAAAAASSRAGSS).

It belongs to the protein kinase superfamily. NEK Ser/Thr protein kinase family. NIMA subfamily. As to expression, expressed in anthers, pistils and leaves.

The catalysed reaction is L-seryl-[protein] + ATP = O-phospho-L-seryl-[protein] + ADP + H(+). It catalyses the reaction L-threonyl-[protein] + ATP = O-phospho-L-threonyl-[protein] + ADP + H(+). In terms of biological role, may be involved in plant development processes. This Oryza sativa subsp. japonica (Rice) protein is Serine/threonine-protein kinase Nek1.